We begin with the raw amino-acid sequence, 326 residues long: tRNA-modifying protein YgfZ (326 aa).

Positions 27 and 189 each coordinate folate.

Belongs to the tRNA-modifying YgfZ family.

Its subcellular location is the cytoplasm. Functionally, folate-binding protein involved in regulating the level of ATP-DnaA and in the modification of some tRNAs. It is probably a key factor in regulatory networks that act via tRNA modification, such as initiation of chromosomal replication. The polypeptide is tRNA-modifying protein YgfZ (Salmonella schwarzengrund (strain CVM19633)).